The primary structure comprises 314 residues: Ribosomal RNA small subunit methyltransferase H (314 aa).

S-adenosyl-L-methionine-binding positions include 58–60, Asp76, Phe103, Asp119, and Gln126; that span reads GGH.

Belongs to the methyltransferase superfamily. RsmH family.

It localises to the cytoplasm. The catalysed reaction is cytidine(1402) in 16S rRNA + S-adenosyl-L-methionine = N(4)-methylcytidine(1402) in 16S rRNA + S-adenosyl-L-homocysteine + H(+). Specifically methylates the N4 position of cytidine in position 1402 (C1402) of 16S rRNA. The chain is Ribosomal RNA small subunit methyltransferase H from Gloeobacter violaceus (strain ATCC 29082 / PCC 7421).